A 599-amino-acid polypeptide reads, in one-letter code: THO complex subunit 1 (599 aa).

Disordered stretches follow at residues 376–395 (EKQP…RRQR) and 497–599 (KYQA…MPVS). Positions 502 to 522 (PNEKAKRAKKEETKGGSHETE) are enriched in basic and acidic residues. Acidic residues predominate over residues 575-585 (QIEDGETEEAG).

Component of the THO complex, which is composed of THO1, THO2, THO3, THO5, THO6 and THO7.

Its subcellular location is the nucleus. Acts as a component of the THO subcomplex of the TREX complex which is thought to couple mRNA transcription, processing and nuclear export. Contributes to the integrity of the endogenous trans-acting small interfering RNA (ta-siRNA) pathway. May process or transport a long RNA molecule so that it can be a template for secondary siRNA production. May participate in the trafficking of siRNA precursors to the ARGONAUTE catalytic center. Required for the generation of functional messenger ribonucleoproteins (mRNPs). Plays an important roles in plant innate immunity. The sequence is that of THO complex subunit 1 (THO1) from Arabidopsis thaliana (Mouse-ear cress).